Here is a 226-residue protein sequence, read N- to C-terminus: UPF0111 protein HI_1603 (226 aa).

The protein belongs to the UPF0111 family.

This is UPF0111 protein HI_1603 from Haemophilus influenzae (strain ATCC 51907 / DSM 11121 / KW20 / Rd).